The primary structure comprises 427 residues: Serine--tRNA ligase (427 aa).

236–238 (TAE) is an L-serine binding site. 267 to 269 (RRE) lines the ATP pocket. Glu290 is an L-serine binding site. 354–357 (EISS) provides a ligand contact to ATP. Residue Ser390 coordinates L-serine.

It belongs to the class-II aminoacyl-tRNA synthetase family. Type-1 seryl-tRNA synthetase subfamily. As to quaternary structure, homodimer. The tRNA molecule binds across the dimer.

The protein localises to the cytoplasm. The enzyme catalyses tRNA(Ser) + L-serine + ATP = L-seryl-tRNA(Ser) + AMP + diphosphate + H(+). The catalysed reaction is tRNA(Sec) + L-serine + ATP = L-seryl-tRNA(Sec) + AMP + diphosphate + H(+). It participates in aminoacyl-tRNA biosynthesis; selenocysteinyl-tRNA(Sec) biosynthesis; L-seryl-tRNA(Sec) from L-serine and tRNA(Sec): step 1/1. In terms of biological role, catalyzes the attachment of serine to tRNA(Ser). Is also able to aminoacylate tRNA(Sec) with serine, to form the misacylated tRNA L-seryl-tRNA(Sec), which will be further converted into selenocysteinyl-tRNA(Sec). The sequence is that of Serine--tRNA ligase from Picosynechococcus sp. (strain ATCC 27264 / PCC 7002 / PR-6) (Agmenellum quadruplicatum).